The chain runs to 689 residues: Centrosomal protein of 78 kDa (689 aa).

Phosphoserine is present on residues S325 and S327. Disordered stretches follow at residues 432-451 (SSEVEEVDDSSESVHEVPEK), 563-589 (PQMTSTVSNPPKEEKKALEDEKPEPKQ), and 614-689 (DSFP…TESH). A coiled-coil region spans residues 450–505 (EKTSIEQEALQEKLEECLKQLKEERVIRLKVDKRVSELEHENAQLRNINFSLSEAL). Basic and acidic residues-rich tracts occupy residues 573-587 (PKEEKKALEDEKPEP) and 666-689 (QRKEEELSRNSRSSSEKKTKTESH).

Belongs to the CEP78 family. Interacts with PLK4. Interacts with FAM161A. Interacts with IFT20; regulating IFT20 stability and localization. Interacts with TTC21A; regulating TTC21A stability and localization. Interacts with USP16; promoting USP16-dependent deubiquitination of tektins. Interacts with DCAF1/VPRBP; promoting localization of the EDVP complex to centrosomes. Interacts with CEP350; promoting CEP78 localization to centrosome and centriole. Widely expressed. Expressed in different retinal cell types with higher expression in cone compared to rod cells (at protein level).

Its subcellular location is the cytoplasm. The protein localises to the cytoskeleton. It localises to the microtubule organizing center. It is found in the centrosome. The protein resides in the centriole. Its subcellular location is the cilium basal body. Its function is as follows. Centriole wall protein that localizes to mature centrioles and regulates centriole and cilia biogenesis. Involved in centrosome duplication: required for efficient PLK4 centrosomal localization and PLK4-induced overduplication of centrioles. Involved in cilium biogenesis and controls cilium length. Acts as a regulator of protein stability by preventing ubiquitination of centrosomal proteins, such as CCP110 and tektins. Associates with the EDVP complex, preventing ubiquitination and degradation of CCP110. Promotes deubiquitination of tektin proteins (TEKT1, TEKT2, TEK3, TEKT4 and TEKT5) via its interaction with USP16. This Homo sapiens (Human) protein is Centrosomal protein of 78 kDa.